A 223-amino-acid chain; its full sequence is Transmembrane protein 235 (223 aa).

The first 28 residues, 1 to 28 (MARLGALLLAAALGALLSFALLAAAVAS), serve as a signal peptide directing secretion. The N-linked (GlcNAc...) asparagine glycan is linked to N41. 3 helical membrane passes run 96 to 116 (VIVV…CGLL), 126 to 146 (LLFT…GVSI), and 176 to 196 (WSMA…TLLL).

The protein belongs to the PMP-22/EMP/MP20 family. N-glycosylated.

The protein localises to the membrane. It localises to the endoplasmic reticulum. This is Transmembrane protein 235 (TMEM235) from Homo sapiens (Human).